The following is a 176-amino-acid chain: 2-C-methyl-D-erythritol 2,4-cyclodiphosphate synthase (176 aa).

3 residues coordinate a divalent metal cation: Asp23, His25, and His60. Residue 23 to 25 (DSH) participates in 4-CDP-2-C-methyl-D-erythritol 2-phosphate binding. A 4-CDP-2-C-methyl-D-erythritol 2-phosphate-binding site is contributed by 149-152 (TSGE).

Belongs to the IspF family. In terms of assembly, homotrimer. A divalent metal cation is required as a cofactor.

It carries out the reaction 4-CDP-2-C-methyl-D-erythritol 2-phosphate = 2-C-methyl-D-erythritol 2,4-cyclic diphosphate + CMP. It participates in isoprenoid biosynthesis; isopentenyl diphosphate biosynthesis via DXP pathway; isopentenyl diphosphate from 1-deoxy-D-xylulose 5-phosphate: step 4/6. Involved in the biosynthesis of isopentenyl diphosphate (IPP) and dimethylallyl diphosphate (DMAPP), two major building blocks of isoprenoid compounds. Catalyzes the conversion of 4-diphosphocytidyl-2-C-methyl-D-erythritol 2-phosphate (CDP-ME2P) to 2-C-methyl-D-erythritol 2,4-cyclodiphosphate (ME-CPP) with a corresponding release of cytidine 5-monophosphate (CMP). This is 2-C-methyl-D-erythritol 2,4-cyclodiphosphate synthase from Chlamydia abortus (strain DSM 27085 / S26/3) (Chlamydophila abortus).